A 193-amino-acid polypeptide reads, in one-letter code: Oligoribonuclease (193 aa).

The 164-residue stretch at 14 to 177 (LIWIDLEMTG…SDIYDSIAEL (164 aa)) folds into the Exonuclease domain. The active site involves Tyr135.

Belongs to the oligoribonuclease family.

It is found in the cytoplasm. Its function is as follows. 3'-to-5' exoribonuclease specific for small oligoribonucleotides. The polypeptide is Oligoribonuclease (Xylella fastidiosa (strain Temecula1 / ATCC 700964)).